Consider the following 139-residue polypeptide: Peptide methionine sulfoxide reductase MsrB (139 aa).

The MsrB domain occupies 8–130; sequence DREWQRELSP…NSASLQLKTQ (123 aa). Residues C47, C50, C96, and C99 each contribute to the Zn(2+) site. C119 (nucleophile) is an active-site residue.

It belongs to the MsrB Met sulfoxide reductase family. Requires Zn(2+) as cofactor.

The catalysed reaction is L-methionyl-[protein] + [thioredoxin]-disulfide + H2O = L-methionyl-(R)-S-oxide-[protein] + [thioredoxin]-dithiol. The protein is Peptide methionine sulfoxide reductase MsrB of Acinetobacter baumannii (strain AB307-0294).